Reading from the N-terminus, the 465-residue chain is uncharacterized protein (465 aa).

One can recognise an RAMA domain in the interval 6–91; it reads NVTLSNLIDF…LKLKREYLFR (86 aa). Disordered regions lie at residues 95-377 and 392-465; these read TGKN…SNNQ and YNQQ…KSKS. The segment covering 117–137 has biased composition (low complexity); it reads PQQQQQQQQQQQQQQQQQQQP. Positions 156 to 169 are enriched in acidic residues; it reads ETSDQDIDNDDDDA. Residues 177 to 190 show a composition bias toward low complexity; that stretch reads TTTTTTTTTTTTTT. Over residues 208 to 220 the composition is skewed to basic and acidic residues; the sequence is PKEKKKEKKENIL. A coiled-coil region spans residues 214-242; it reads EKKENILTKKKQQSLQYQQQLQLLQRQNS. Residues 226 to 263 are compositionally biased toward low complexity; the sequence is QSLQYQQQLQLLQRQNSPPSVSPSSSTSTSSSTSSPAS. Polar residues predominate over residues 264–294; sequence NQIFNSFGPNSQNHNQYGINYNSQQHQPQQY. Residues 295–376 are compositionally biased toward low complexity; it reads NNNNNNNNNN…NNNINNNSNN (82 aa). Residues 392 to 407 show a composition bias toward polar residues; that stretch reads YNQQNPPKHQYPNNFL. Residues 424–442 show a composition bias toward low complexity; the sequence is NQSQNQNQNQNQNQNQNQK. Basic residues predominate over residues 443-465; it reads SKSKSKSKSKFKSKSKSKSKSKS.

This is an uncharacterized protein from Dictyostelium discoideum (Social amoeba).